We begin with the raw amino-acid sequence, 357 residues long: MNDKILFIDRDGTLIHEPKDNFQIDSLDKLLLEPYVIPTLIALKNIKFKFIIVTNQNGLGTDLFPKTKFNKPHQFMIQIFKSQGIKFDQILICPHLPEDQCNCRKPKTGLISCWLKNKSLDMPNSYVIGDRDTDIQFAHNIGIQGIKYHQIHFNWKKIHKYLMQNSHRVAHIQRITNETNVDVKIWLNQCDQNKINTGIHFFDHMLEQIAIHAKIRMHIITKGDLHIDDHHTIEDTALSLGEALNQALGDKRGIGRFGFTLPMDESIAQCILDLSGRTYFDYQAEYSLQKIGNFSTHMIEHFFRSLSSKMHCTLHLKVIGNNDHHKAESLFKSFGKSLNQAIYIQHNQIPSSKGILL.

A histidinol-phosphatase region spans residues 1–167; that stretch reads MNDKILFIDR…IHKYLMQNSH (167 aa). The active-site Nucleophile is the aspartate 9. The Mg(2+) site is built by aspartate 9 and aspartate 11. The Proton donor role is filled by aspartate 11. Positions 93, 95, 101, and 103 each coordinate Zn(2+). Residue aspartate 130 coordinates Mg(2+). Positions 168 to 357 are imidazoleglycerol-phosphate dehydratase; it reads RVAHIQRITN…QIPSSKGILL (190 aa).

This sequence in the N-terminal section; belongs to the histidinol-phosphatase family. It in the C-terminal section; belongs to the imidazoleglycerol-phosphate dehydratase family. It depends on Mg(2+) as a cofactor. The cofactor is Zn(2+).

The protein localises to the cytoplasm. It catalyses the reaction D-erythro-1-(imidazol-4-yl)glycerol 3-phosphate = 3-(imidazol-4-yl)-2-oxopropyl phosphate + H2O. The catalysed reaction is L-histidinol phosphate + H2O = L-histidinol + phosphate. The protein operates within amino-acid biosynthesis; L-histidine biosynthesis; L-histidine from 5-phospho-alpha-D-ribose 1-diphosphate: step 6/9. It participates in amino-acid biosynthesis; L-histidine biosynthesis; L-histidine from 5-phospho-alpha-D-ribose 1-diphosphate: step 8/9. This is Histidine biosynthesis bifunctional protein HisB from Blochmanniella floridana.